The sequence spans 93 residues: Large ribosomal subunit protein bL31B (93 aa).

Belongs to the bacterial ribosomal protein bL31 family. Type B subfamily. Part of the 50S ribosomal subunit.

This is Large ribosomal subunit protein bL31B from Psychrobacter arcticus (strain DSM 17307 / VKM B-2377 / 273-4).